Reading from the N-terminus, the 184-residue chain is C-phycoerythrin class 1 subunit beta (184 aa).

(2R,3E)-phycoerythrobilin is bound by residues cysteine 50 and cysteine 61. Asparagine 72 carries the post-translational modification N4-methylasparagine. Residues cysteine 82 and cysteine 165 each coordinate (2R,3E)-phycoerythrobilin.

This sequence belongs to the phycobiliprotein family. In terms of assembly, heterodimer of an alpha and a beta chain. Contains three covalently linked phycoerythrobilin chromophores.

The protein localises to the cellular thylakoid membrane. In terms of biological role, light-harvesting photosynthetic bile pigment-protein from the phycobiliprotein complex. In Synechococcus sp. (strain WH8020), this protein is C-phycoerythrin class 1 subunit beta (cpeB).